The chain runs to 107 residues: Ig kappa chain V-VI region NQ2-48.2.2 (107 aa).

A framework-1 region spans residues Gln1–Cys23. Cysteines 23 and 87 form a disulfide. Residues Ser24–His33 form a complementarity-determining-1 region. The interval Trp34 to Tyr48 is framework-2. Residues Asp49 to Ser55 form a complementarity-determining-2 region. Residues Gly56 to Cys87 form a framework-3 region. Positions Gln88 to Thr96 are complementarity-determining-3. The interval Phe97–Lys106 is framework-4.

Anti-2-phenyl oxazolone (PHOX) Antibody. The sequence is that of Ig kappa chain V-VI region NQ2-48.2.2 from Mus musculus (Mouse).